A 261-amino-acid polypeptide reads, in one-letter code: Chanoclavine-I dehydrogenase easD (261 aa).

NADP(+)-binding residues include Ile-18, Lys-48, Asp-66, Arg-132, Tyr-166, Lys-170, and Thr-201. Catalysis depends on Tyr-166, which acts as the Proton donor. Lys-170 functions as the Lowers pKa of active site Tyr in the catalytic mechanism.

The protein belongs to the short-chain dehydrogenases/reductases (SDR) family.

The enzyme catalyses chanoclavine-I + NAD(+) = chanoclavine-I aldehyde + NADH + H(+). The protein operates within alkaloid biosynthesis; ergot alkaloid biosynthesis. Its function is as follows. Chanoclavine-I dehydrogenase; part of the gene cluster that mediates the biosynthesis of fumiclavanine C, a fungal ergot alkaloid. DmaW catalyzes the first step of ergot alkaloid biosynthesis by condensing dimethylallyl diphosphate (DMAP) and tryptophan to form 4-dimethylallyl-L-tryptophan. The second step is catalyzed by the methyltransferase easF that methylates 4-dimethylallyl-L-tryptophan in the presence of S-adenosyl-L-methionine, resulting in the formation of 4-dimethylallyl-L-abrine. The catalase easC and the FAD-dependent oxidoreductase easE then transform 4-dimethylallyl-L-abrine to chanoclavine-I which is further oxidized by EasD in the presence of NAD(+), resulting in the formation of chanoclavine-I aldehyde. EasA reduces chanoclavine-I aldehyde to dihydrochanoclavine-I aldehyde that spontaneously dehydrates to form 6,8-dimethyl-6,7-didehydroergoline. EasG then catalyzes the reduction of 6,8-dimethyl-6,7-didehydroergoline to form festuclavine. Hydrolysis of festuclavine by easM then leads to the formation of fumigaclavine B which is in turn acetylated by easN to fumigaclavine A. Finally, easL catalyzes the conversion of fumigaclavine A into fumigaclavine C by attaching a dimethylallyl moiety to C-2 of the indole nucleus. The polypeptide is Chanoclavine-I dehydrogenase easD (Aspergillus fumigatus (strain ATCC MYA-4609 / CBS 101355 / FGSC A1100 / Af293) (Neosartorya fumigata)).